The primary structure comprises 1513 residues: DNA-directed RNA polymerase subunit beta'' (1513 aa).

Zn(2+)-binding residues include Cys-220, Cys-296, Cys-303, and Cys-306. Positions 644 to 769 (RTREKDSENE…EYGNPEEDSV (126 aa)) are disordered. Positions 659–679 (NEYRTREEECKTLEDEYRTRE) are enriched in basic and acidic residues. The segment covering 680–707 (EEYETLEDEYGIPENEYETLEDEYGILE) has biased composition (acidic residues). Residues 726–737 (NKYRPREDKYGT) are compositionally biased toward basic and acidic residues. Residues 738 to 767 (LEEDSEDEHGTLEEDSEEDSEDEYGNPEED) are compositionally biased toward acidic residues.

This sequence belongs to the RNA polymerase beta' chain family. RpoC2 subfamily. In terms of assembly, in plastids the minimal PEP RNA polymerase catalytic core is composed of four subunits: alpha, beta, beta', and beta''. When a (nuclear-encoded) sigma factor is associated with the core the holoenzyme is formed, which can initiate transcription. Requires Zn(2+) as cofactor.

It localises to the plastid. Its subcellular location is the chloroplast. It carries out the reaction RNA(n) + a ribonucleoside 5'-triphosphate = RNA(n+1) + diphosphate. Its function is as follows. DNA-dependent RNA polymerase catalyzes the transcription of DNA into RNA using the four ribonucleoside triphosphates as substrates. In Oryza sativa (Rice), this protein is DNA-directed RNA polymerase subunit beta''.